Here is a 340-residue protein sequence, read N- to C-terminus: Uroporphyrinogen decarboxylase (340 aa).

Substrate is bound by residues 23–27 (RQAGR), Asp-72, Tyr-147, Thr-202, and His-316.

Belongs to the uroporphyrinogen decarboxylase family. Homodimer.

Its subcellular location is the cytoplasm. It catalyses the reaction uroporphyrinogen III + 4 H(+) = coproporphyrinogen III + 4 CO2. It functions in the pathway porphyrin-containing compound metabolism; protoporphyrin-IX biosynthesis; coproporphyrinogen-III from 5-aminolevulinate: step 4/4. Functionally, catalyzes the decarboxylation of four acetate groups of uroporphyrinogen-III to yield coproporphyrinogen-III. In Geobacter sulfurreducens (strain ATCC 51573 / DSM 12127 / PCA), this protein is Uroporphyrinogen decarboxylase.